The following is a 418-amino-acid chain: L-rhamnose isomerase (418 aa).

Mn(2+) contacts are provided by His-261, Asp-293, and Asp-295.

It belongs to the rhamnose isomerase family. It depends on Mn(2+) as a cofactor.

It localises to the cytoplasm. The catalysed reaction is L-rhamnopyranose = L-rhamnulose. Its pathway is carbohydrate degradation; L-rhamnose degradation; glycerone phosphate from L-rhamnose: step 1/3. In terms of biological role, catalyzes the interconversion of L-rhamnose and L-rhamnulose. The chain is L-rhamnose isomerase from Clostridium beijerinckii (strain ATCC 51743 / NCIMB 8052) (Clostridium acetobutylicum).